The following is a 154-amino-acid chain: Myoglobin (154 aa).

Positions 2-148 (GLSDGEWQLV…FRNDMATKYK (147 aa)) constitute a Globin domain. Position 4 is a phosphoserine (serine 4). Histidine 65 is a nitrite binding site. Histidine 65 provides a ligand contact to O2. Histidine 94 serves as a coordination point for heme b.

Belongs to the globin family. As to quaternary structure, monomeric.

It is found in the cytoplasm. Its subcellular location is the sarcoplasm. The catalysed reaction is Fe(III)-heme b-[protein] + nitric oxide + H2O = Fe(II)-heme b-[protein] + nitrite + 2 H(+). It carries out the reaction H2O2 + AH2 = A + 2 H2O. Its function is as follows. Monomeric heme protein which primary function is to store oxygen and facilitate its diffusion within muscle tissues. Reversibly binds oxygen through a pentacoordinated heme iron and enables its timely and efficient release as needed during periods of heightened demand. Depending on the oxidative conditions of tissues and cells, and in addition to its ability to bind oxygen, it also has a nitrite reductase activity whereby it regulates the production of bioactive nitric oxide. Under stress conditions, like hypoxia and anoxia, it also protects cells against reactive oxygen species thanks to its pseudoperoxidase activity. This Tachyglossus aculeatus aculeatus (Southeast Australian short-beaked echidna) protein is Myoglobin (MB).